Here is a 1041-residue protein sequence, read N- to C-terminus: MFASTLRKTFVFLGLATYSAAALTTTSNSTHYTISNSRFSVAVAKSNGHVVDANLDGQDLLGPLSGNSGKGPYLDCSCTPEGFWTPGAEPALVNGTDSTGTPYVGVIMTDTYETTNQTLSQYLFLRGEETGLHAFSRVTYYNESDYFLRGLGELRTLFRPNTNLWTHFSGSEGNYGPMPLSSTEKITVQDATTYLGDTTDDPYVSQYSDYFTKYTLTESWRDHDVHGHFSNGSTSGDGNTYGAWLVHNTRETYYGGPLHADLVVDGIVYNYIVSGHYGAPNPNLTHGFDRTFGPQYYHFNSGGPGTTLEELRADAAQYASPEWNAEFYDSIAKHIPNYVPSTGRTTFRGKVNLPKGAKKPIIVLSENEQDFQLNVFKKDSLQYWAEIDGSGAFTIPRVVKGTYRVTIYADEIFGWFIKDNVKVIGSNAHTFTWKEETAGKEIWRIGVPDKSSGEFLHGYAPDTSKPLQPEQYRIYWGKYDYPSDFPEGVNYHVGKSDPAKDLNYIHWSFFPSQGNHLRNEPYYQNVNNWTITFDLTASQLRNTKTATFTVQLAGTRNANGNSKWNPDPAKYNNLPWTVNVNGIYEDTWEIPYWRSGSCGVRSGVQCQNTEHKFVFDAGKLRKGRNEFVLSLPFNATSVETALLPNSLYVQVVSMEAVSVSNDMRVLVQAFMPLVTWGTAVEKRVLLTGIVSVSAMAKEDYPMISRPCPRKGGTRRRKKERKKEGKKQGRTVLDALLQRSEQDSFWSRFCRSPIESVAQYVYGQGSTALRKKTTDNLVRVVCVSDTHNTKPNLPDGDILIHAGDLTESGTKEELEKQIYWLDSQPHRYKIVIAGNHETFLDRNYHSHHGNERVTMDWKSLIYLENTSAILDLGAGHQLKVFGSPYTPKHGNGAFQYPRTDTTTWEEIPKDTDLLVTHGPPKAHLDLGHLGCRVLRQALWEMESRPLLHVFGHIHGGYGKEVVCWDLCQRAYEAIMDGESRWWNLCVLFYCWILRLFFDWTADGRATVLVNAATVGGVRDLKRREAICVDIQAGSKRFLSGCT.

The N-terminal stretch at 1-21 (MFASTLRKTFVFLGLATYSAA) is a signal peptide. N-linked (GlcNAc...) asparagine glycosylation is found at Asn28, Asn94, Asn116, Asn142, Asn231, Asn283, Asn528, and Asn634. Positions 703–728 (ISRPCPRKGGTRRRKKERKKEGKKQG) are disordered. Residues 707 to 720 (CPRKGGTRRRKKER) are compositionally biased toward basic residues. Asn864 is a glycosylation site (N-linked (GlcNAc...) asparagine).

It belongs to the polysaccharide lyase 4 family.

It localises to the secreted. It carries out the reaction Endotype eliminative cleavage of L-alpha-rhamnopyranosyl-(1-&gt;4)-alpha-D-galactopyranosyluronic acid bonds of rhamnogalacturonan I domains in ramified hairy regions of pectin leaving L-rhamnopyranose at the reducing end and 4-deoxy-4,5-unsaturated D-galactopyranosyluronic acid at the non-reducing end.. Its function is as follows. Pectinolytic enzymes consist of four classes of enzymes: pectin lyase, polygalacturonase, pectin methylesterase and rhamnogalacturonase. Degrades the rhamnogalacturonan I (RG-I) backbone of pectin. The chain is Probable rhamnogalacturonate lyase C (rglC) from Emericella nidulans (strain FGSC A4 / ATCC 38163 / CBS 112.46 / NRRL 194 / M139) (Aspergillus nidulans).